Here is a 127-residue protein sequence, read N- to C-terminus: Large ribosomal subunit protein bL19 (127 aa).

It belongs to the bacterial ribosomal protein bL19 family.

Functionally, this protein is located at the 30S-50S ribosomal subunit interface and may play a role in the structure and function of the aminoacyl-tRNA binding site. This chain is Large ribosomal subunit protein bL19, found in Bradyrhizobium sp. (strain BTAi1 / ATCC BAA-1182).